Here is a 275-residue protein sequence, read N- to C-terminus: Adenylate kinase (275 aa).

ATP is bound at residue 54–59; sequence GAGKGT. The interval 74–103 is NMP; it reads ATGDMLRSQVAKKTPLGREAKKIMDQGGLV. AMP is bound by residues threonine 75, arginine 80, 101–103, 130–133, and glutamine 137; these read GLV and GFPR. The LID stretch occupies residues 171–208; the sequence is GRLVHPASGRSYHRVFNPPKADMKDDITGEPLVSRSDD. ATP contacts are provided by residues arginine 172 and 181–182; that span reads SY. AMP-binding residues include arginine 205 and arginine 216. An ATP-binding site is contributed by glutamine 244.

This sequence belongs to the adenylate kinase family. AK2 subfamily. Monomer.

Its subcellular location is the cytoplasm. The protein localises to the cytosol. It is found in the mitochondrion intermembrane space. The catalysed reaction is AMP + ATP = 2 ADP. In terms of biological role, catalyzes the reversible transfer of the terminal phosphate group between ATP and AMP. Plays an important role in cellular energy homeostasis and in adenine nucleotide metabolism. Adenylate kinase activity is critical for regulation of the phosphate utilization and the AMP de novo biosynthesis pathways. The chain is Adenylate kinase (adk1) from Botryotinia fuckeliana (strain B05.10) (Noble rot fungus).